Here is a 243-residue protein sequence, read N- to C-terminus: Adenosine 5'-phosphosulfate reductase (243 aa).

[4Fe-4S] cluster is bound by residues Cys-126, Cys-127, Cys-209, and Cys-212. Cys-235 functions as the Nucleophile; cysteine thiosulfonate intermediate in the catalytic mechanism.

It belongs to the PAPS reductase family. CysH subfamily. [4Fe-4S] cluster serves as cofactor.

Its subcellular location is the cytoplasm. It carries out the reaction [thioredoxin]-disulfide + sulfite + AMP + 2 H(+) = adenosine 5'-phosphosulfate + [thioredoxin]-dithiol. The protein operates within sulfur metabolism; hydrogen sulfide biosynthesis; sulfite from sulfate. Its function is as follows. Catalyzes the formation of sulfite from adenosine 5'-phosphosulfate (APS) using thioredoxin as an electron donor. In Staphylococcus epidermidis (strain ATCC 12228 / FDA PCI 1200), this protein is Adenosine 5'-phosphosulfate reductase.